An 877-amino-acid polypeptide reads, in one-letter code: MEDKNRLLLIDGSSVAFRAFFALYNQLDRFKAPNGLHTNAIFAFHTMLSSLMERIQPTHVLIAFDAGKTTFRTEMFADYKGGRSKTPDEFREQLPFIKEMIEKLGIRHYELANYEADDIIGTLDKMAEAPDVNFDVTIVTGDKDMIQLVDGNTRVEISKKGVAEFEEFTPDYLLEKMGLTPSQFIDLKALMGDSSDNYPGVTKVGEKTGLKLLQEFGSLENLYENVETLKASKMKDNLIADKEMAFLSQQLATINTKAPLEIGLEDTLLKEKNVAELGQFYDEMGFSQFKSKLLADGGGEVTDETVSEEIKFEIVTDKSSVASVNADDFFYLETLGENYHREQIVAFAWGNSEKIYVSKNLDLLTEMKFPENTYDFKKNRVLLSHLNIELPLVKFDAMLAKYLISTTEDNKISTIARLFDVGHLATDEEIFGKGTKLALPDDEILFDHLARKIRVLARAKEKMMAELIENEQEHLLSDMELPLAEVLAKMEITGISVSQNTLEEIGAENEEKLASLTREIYDLAGEEFNINSPKQLGVILFEKLQLPVGKKTKTGYSTAVDVLEDLAALSPVVAKILEYRQINKVQSTYVKGLIPQIADDGKIHTRYVQDLTQTGRLSSVDPNLQNIPVRLEEGRKIRKAFVPSQDSLLLSSDYSQIELRVLAHISADEHLIDAFKHGADIHTSTAMRVFGIEKAEDVTANDRRNAKAVNFGVVYGISDFGLARNLGITRKDAKNYIETYFERYPGIKTYMENIVREARDKGFVETMSHRRRKIPDINARNFNVRGFAERTAINSPIQGSAADILKIAMINLDKALTERQSKSKLLLQVHDEIILDVPLEELEDIKALVKQTMEEAIELAVPLKVDDNTGKTWYEAK.

In terms of domain architecture, 5'-3' exonuclease spans 180–272 (TPSQFIDLKA…GLEDTLLKEK (93 aa)). The region spanning 312 to 468 (FEIVTDKSSV…AKEKMMAELI (157 aa)) is the 3'-5' exonuclease domain.

This sequence belongs to the DNA polymerase type-A family. In terms of assembly, single-chain monomer with multiple functions.

It carries out the reaction DNA(n) + a 2'-deoxyribonucleoside 5'-triphosphate = DNA(n+1) + diphosphate. In terms of biological role, in addition to polymerase activity, this DNA polymerase exhibits 3'-5' and 5'-3' exonuclease activity. The polypeptide is DNA polymerase I (polA) (Lactococcus lactis subsp. cremoris (strain MG1363)).